The sequence spans 70 residues: U-scoloptoxin(20)-Sm1a (70 aa).

Positions 1-24 are cleaved as a signal peptide; the sequence is MKKRSQVFCIFIAMVLLILPLSMS.

The protein belongs to the scoloptoxin-20 family. Post-translationally, contains 3 disulfide bonds. As to expression, expressed by the venom gland.

It is found in the secreted. This chain is U-scoloptoxin(20)-Sm1a, found in Scolopendra morsitans (Tanzanian blue ringleg centipede).